We begin with the raw amino-acid sequence, 261 residues long: Cytochrome c oxidase subunit 3 (261 aa).

Over 1 to 15 the chain is Mitochondrial matrix; the sequence is MTHQTHAYHMVNPSP. A helical membrane pass occupies residues 16 to 34; it reads WPLTGALSALLMTSGLVMW. The Mitochondrial intermembrane segment spans residues 35 to 40; sequence FHYHST. A helical transmembrane segment spans residues 41 to 66; the sequence is ILVLLGLLTNILTMYQWWRDVVREGT. Topologically, residues 67–72 are mitochondrial matrix; the sequence is FQGHHT. A helical membrane pass occupies residues 73–105; sequence PTVQKGLRYGMVLFIISEVFFFAGFFWAFYHSS. Over 106 to 128 the chain is Mitochondrial intermembrane; sequence LAPTPELGGCWPPTGIHPLDPME. A helical transmembrane segment spans residues 129–152; it reads VPLLNTSVLLASGVTITWAHHSLM. Residues 153-155 lie on the Mitochondrial matrix side of the membrane; it reads EGN. The helical transmembrane segment at 156-183 threads the bilayer; it reads RKQMLQALFITISLGIYFTLLQASEYHE. The Mitochondrial intermembrane portion of the chain corresponds to 184–190; that stretch reads ASFSISD. A helical membrane pass occupies residues 191–223; it reads GIYGSTFFMATGFHGLHVIIGSTFLAVCFLRQL. The Mitochondrial matrix segment spans residues 224–232; the sequence is KFHFTSNHH. The chain crosses the membrane as a helical span at residues 233–256; sequence FGFEAAAWYWHFVDVVWLFLYVSI. Over 257-261 the chain is Mitochondrial intermembrane; it reads YWWGS.

Belongs to the cytochrome c oxidase subunit 3 family. Component of the cytochrome c oxidase (complex IV, CIV), a multisubunit enzyme composed of 14 subunits. The complex is composed of a catalytic core of 3 subunits MT-CO1, MT-CO2 and MT-CO3, encoded in the mitochondrial DNA, and 11 supernumerary subunits COX4I, COX5A, COX5B, COX6A, COX6B, COX6C, COX7A, COX7B, COX7C, COX8 and NDUFA4, which are encoded in the nuclear genome. The complex exists as a monomer or a dimer and forms supercomplexes (SCs) in the inner mitochondrial membrane with NADH-ubiquinone oxidoreductase (complex I, CI) and ubiquinol-cytochrome c oxidoreductase (cytochrome b-c1 complex, complex III, CIII), resulting in different assemblies (supercomplex SCI(1)III(2)IV(1) and megacomplex MCI(2)III(2)IV(2)).

It is found in the mitochondrion inner membrane. It catalyses the reaction 4 Fe(II)-[cytochrome c] + O2 + 8 H(+)(in) = 4 Fe(III)-[cytochrome c] + 2 H2O + 4 H(+)(out). Component of the cytochrome c oxidase, the last enzyme in the mitochondrial electron transport chain which drives oxidative phosphorylation. The respiratory chain contains 3 multisubunit complexes succinate dehydrogenase (complex II, CII), ubiquinol-cytochrome c oxidoreductase (cytochrome b-c1 complex, complex III, CIII) and cytochrome c oxidase (complex IV, CIV), that cooperate to transfer electrons derived from NADH and succinate to molecular oxygen, creating an electrochemical gradient over the inner membrane that drives transmembrane transport and the ATP synthase. Cytochrome c oxidase is the component of the respiratory chain that catalyzes the reduction of oxygen to water. Electrons originating from reduced cytochrome c in the intermembrane space (IMS) are transferred via the dinuclear copper A center (CU(A)) of subunit 2 and heme A of subunit 1 to the active site in subunit 1, a binuclear center (BNC) formed by heme A3 and copper B (CU(B)). The BNC reduces molecular oxygen to 2 water molecules using 4 electrons from cytochrome c in the IMS and 4 protons from the mitochondrial matrix. The protein is Cytochrome c oxidase subunit 3 (MT-CO3) of Dugong dugon (Dugong).